The sequence spans 61 residues: Photosystem II reaction center protein K (61 aa).

Positions methionine 1 to alanine 24 are excised as a propeptide. Residues phenylalanine 32 to leucine 52 form a helical membrane-spanning segment.

Belongs to the PsbK family. As to quaternary structure, PSII is composed of 1 copy each of membrane proteins PsbA, PsbB, PsbC, PsbD, PsbE, PsbF, PsbH, PsbI, PsbJ, PsbK, PsbL, PsbM, PsbT, PsbX, PsbY, PsbZ, Psb30/Ycf12, at least 3 peripheral proteins of the oxygen-evolving complex and a large number of cofactors. It forms dimeric complexes.

It localises to the plastid. The protein localises to the chloroplast thylakoid membrane. Functionally, one of the components of the core complex of photosystem II (PSII). PSII is a light-driven water:plastoquinone oxidoreductase that uses light energy to abstract electrons from H(2)O, generating O(2) and a proton gradient subsequently used for ATP formation. It consists of a core antenna complex that captures photons, and an electron transfer chain that converts photonic excitation into a charge separation. This Drimys granadensis protein is Photosystem II reaction center protein K.